Reading from the N-terminus, the 130-residue chain is Small ribosomal subunit protein uS8 (130 aa).

The protein belongs to the universal ribosomal protein uS8 family. Part of the 30S ribosomal subunit. Contacts proteins S5 and S12.

One of the primary rRNA binding proteins, it binds directly to 16S rRNA central domain where it helps coordinate assembly of the platform of the 30S subunit. The chain is Small ribosomal subunit protein uS8 from Sodalis glossinidius (strain morsitans).